Consider the following 72-residue polypeptide: Palustrin-2CG1 (72 aa).

A signal peptide spans 1 to 22; it reads MFTMKKPLLLLFFLGTISLSLC. A propeptide spans 23-39 (removed in mature form); the sequence is QEERGADEDDGEMTEEV. Cys64 and Cys70 are joined by a disulfide.

As to expression, expressed by the skin glands.

It localises to the secreted. Antimicrobial peptide active against a variety of Gram-positive and some Gram-negative bacterial strains. Has antifungal activity against a slime mold isolate. Has hemolytic activity against human erythrocytes. The polypeptide is Palustrin-2CG1 (Amolops chunganensis (Chungan torrent frog)).